The sequence spans 217 residues: Non-structural protein NS3 (217 aa).

This sequence belongs to the orbivirus NS3 family.

Its function is as follows. May play a role in the release of virions from infected cells. The sequence is that of Non-structural protein NS3 (Segment-10) from African horse sickness virus 9 (AHSV-9).